A 167-amino-acid polypeptide reads, in one-letter code: NAD(P)H-quinone oxidoreductase subunit J (167 aa).

Belongs to the complex I 30 kDa subunit family. In terms of assembly, NDH-1 can be composed of about 15 different subunits; different subcomplexes with different compositions have been identified which probably have different functions.

It localises to the cellular thylakoid membrane. The catalysed reaction is a plastoquinone + NADH + (n+1) H(+)(in) = a plastoquinol + NAD(+) + n H(+)(out). It carries out the reaction a plastoquinone + NADPH + (n+1) H(+)(in) = a plastoquinol + NADP(+) + n H(+)(out). Functionally, NDH-1 shuttles electrons from an unknown electron donor, via FMN and iron-sulfur (Fe-S) centers, to quinones in the respiratory and/or the photosynthetic chain. The immediate electron acceptor for the enzyme in this species is believed to be plastoquinone. Couples the redox reaction to proton translocation, and thus conserves the redox energy in a proton gradient. Cyanobacterial NDH-1 also plays a role in inorganic carbon-concentration. The chain is NAD(P)H-quinone oxidoreductase subunit J from Microcystis aeruginosa (strain NIES-843 / IAM M-2473).